Reading from the N-terminus, the 338-residue chain is HTH-type transcriptional regulator SyrM 1 (338 aa).

Positions 35-92 (LDLNTLLALEALLEHRNVTQAARHLGLSQPSVSRALIRLRGVFNDDLLVRGSSGMVPT) constitute an HTH lysR-type domain. Residues 52–72 (VTQAARHLGLSQPSVSRALIR) constitute a DNA-binding region (H-T-H motif).

The protein belongs to the LysR transcriptional regulatory family.

In terms of biological role, transcriptional activator that regulates the expression of genes involved in symbiosis. Among other targets it acts on the nolWBTUV operon. The chain is HTH-type transcriptional regulator SyrM 1 (syrM1) from Sinorhizobium fredii (strain NBRC 101917 / NGR234).